Consider the following 412-residue polypeptide: FAD-dependent monooxygenase nscC (412 aa).

The N-terminal stretch at 1 to 21 (MGKPQETILIIGAGIAGLTAS) is a signal peptide. Residues Glu35 and Ala46 each coordinate FAD. Residues Asn68 and Asn92 are each glycosylated (N-linked (GlcNAc...) asparagine). Residue Arg119 participates in FAD binding. N-linked (GlcNAc...) asparagine glycans are attached at residues Asn170, Asn231, and Asn251. 2 residues coordinate FAD: Asp326 and Gly339.

The protein belongs to the paxM FAD-dependent monooxygenase family. It depends on FAD as a cofactor.

It participates in secondary metabolite biosynthesis. In terms of biological role, FAD-dependent monooxygenase; part of the gene cluster that mediates the biosynthesis of neosartoricin B, a prenylated anthracenone that probably exhibits T-cell antiproliferative activity, suggestive of a physiological role as an immunosuppressive agent. The non-reducing polyketide synthase nscA probably synthesizes and cyclizes the decaketide backbone. The hydrolase nscB then mediates the product release through hydrolysis followed by spontaneous decarboxylation. The prenyltransferase nscD catalyzes the addition of the dimethylallyl group to the aromatic C5. The FAD-dependent monooxygenase nscC is then responsible for the stereospecific hydroxylation at C2. Neosartoricin B can be converted into two additional compounds neosartoricins C and D. Neosartoricin C is a spirocyclic compound that is cyclized through the attack of C3 hydroxyl on C14, followed by dehydration. On the other hand, neosartoricin D is a further cyclized compound in which attack of C2 on C14 in neosartoricin C results in the formation of the acetal-containing dioxabicyclo-octanone ring. Both of these compounds are novel and possibly represent related metabolites of the gene cluster. This chain is FAD-dependent monooxygenase nscC, found in Trichophyton rubrum (strain ATCC MYA-4607 / CBS 118892) (Athlete's foot fungus).